Here is a 207-residue protein sequence, read N- to C-terminus: Probable glutathione S-transferase 5 (207 aa).

Residues 2-81 (VSYKLTYFNG…FLAREFKLNG (80 aa)) enclose the GST N-terminal domain. Glutathione-binding positions include Y8, W39, K43, 51 to 53 (GQL), and 65 to 66 (QS). A GST C-terminal domain is found at 83–207 (TAWEEAQVNS…WIETRPVTPF (125 aa)).

The protein belongs to the GST superfamily. Sigma family.

The enzyme catalyses RX + glutathione = an S-substituted glutathione + a halide anion + H(+). Conjugation of reduced glutathione to a wide number of exogenous and endogenous hydrophobic electrophiles. May play a role in the detoxification of reactive oxygen species produced during pathogenic bacterial infection. This Caenorhabditis elegans protein is Probable glutathione S-transferase 5 (gst-5).